Here is a 96-residue protein sequence, read N- to C-terminus: Co-chaperonin GroES (96 aa).

The protein belongs to the GroES chaperonin family. As to quaternary structure, heptamer of 7 subunits arranged in a ring. Interacts with the chaperonin GroEL.

The protein resides in the cytoplasm. Together with the chaperonin GroEL, plays an essential role in assisting protein folding. The GroEL-GroES system forms a nano-cage that allows encapsulation of the non-native substrate proteins and provides a physical environment optimized to promote and accelerate protein folding. GroES binds to the apical surface of the GroEL ring, thereby capping the opening of the GroEL channel. The chain is Co-chaperonin GroES from Colwellia maris.